The following is a 303-amino-acid chain: Diaminopimelate epimerase (303 aa).

Residues N15 and N72 each coordinate substrate. Catalysis depends on C81, which acts as the Proton donor. Residues 82 to 83, N169, N202, and 220 to 221 contribute to the substrate site; these read GN and ER. C229 functions as the Proton acceptor in the catalytic mechanism. 230–231 is a binding site for substrate; that stretch reads GT.

This sequence belongs to the diaminopimelate epimerase family. As to quaternary structure, homodimer.

The protein resides in the cytoplasm. The catalysed reaction is (2S,6S)-2,6-diaminopimelate = meso-2,6-diaminopimelate. It functions in the pathway amino-acid biosynthesis; L-lysine biosynthesis via DAP pathway; DL-2,6-diaminopimelate from LL-2,6-diaminopimelate: step 1/1. Catalyzes the stereoinversion of LL-2,6-diaminopimelate (L,L-DAP) to meso-diaminopimelate (meso-DAP), a precursor of L-lysine and an essential component of the bacterial peptidoglycan. This Prochlorococcus marinus (strain MIT 9313) protein is Diaminopimelate epimerase.